Reading from the N-terminus, the 478-residue chain is 7-dehydrocholesterol reductase (478 aa).

A disordered region spans residues 1 to 28 (MMASDRVRKRHKGSANGAQTVEKEPSKE). 6 helical membrane-spanning segments follow: residues 43-63 (LSGVILLLCFAPFLVSFFIMA), 97-117 (WAAAKIYAIWVTFQVVLYMCV), 180-200 (WIPLLWCTNILGYAVSTFAFI), 269-289 (VTNSMILVNVLQAVYVVDFFW), 309-329 (LGWGDCVWLPFLYTLQGLYLV), and 333-353 (IQLSTPHAAGVLILGLVGYYI). NADP(+) is bound by residues lysine 361, arginine 365, methionine 398, tryptophan 403, and 410–411 (NY). The helical transmembrane segment at 424–444 (ACGGNHLLPYFYIIYMTILLV) threads the bilayer. NADP(+) is bound by residues aspartate 450, 454-458 (CSNKY), and tyrosine 465.

This sequence belongs to the ERG4/ERG24 family.

It localises to the endoplasmic reticulum membrane. It carries out the reaction cholesterol + NADP(+) = 7-dehydrocholesterol + NADPH + H(+). The enzyme catalyses 7-dehydrodesmosterol + NADPH + H(+) = desmosterol + NADP(+). The protein operates within steroid biosynthesis; cholesterol biosynthesis. In terms of biological role, catalyzes the last step of the cholesterol synthesis pathway, which transforms cholesta-5,7-dien-3beta-ol (7-dehydrocholesterol,7-DHC) into cholesterol by reducing the C7-C8 double bond of its sterol core. Can also metabolize cholesta-5,7,24-trien-3beta-ol (7-dehydrodemosterol, 7-DHD) to desmosterol, which is then metabolized by the Delta(24)-sterol reductase (DHCR24) to cholesterol. Modulates ferroptosis (a form of regulated cell death driven by iron-dependent lipid peroxidation) through the metabolic breakdown of the anti-ferroptotic metabolites 7-DHC and 7-DHD which, when accumulated, divert the propagation of peroxyl radical-mediated damage from phospholipid components to its sterol core, protecting plasma and mitochondrial membranes from phospholipid autoxidation. This is 7-dehydrocholesterol reductase (dhcr7) from Danio rerio (Zebrafish).